We begin with the raw amino-acid sequence, 211 residues long: Protein-methionine-sulfoxide reductase heme-binding subunit MsrQ (211 aa).

A run of 6 helical transmembrane segments spans residues Val-8–Trp-28, Phe-54–Ile-74, Leu-82–Val-102, Pro-116–Thr-136, Phe-153–Ser-173, and Ile-178–Phe-198.

Belongs to the MsrQ family. In terms of assembly, heterodimer of a catalytic subunit (MsrP) and a heme-binding subunit (MsrQ). Requires FMN as cofactor. Heme b is required as a cofactor.

The protein resides in the cell inner membrane. In terms of biological role, part of the MsrPQ system that repairs oxidized periplasmic proteins containing methionine sulfoxide residues (Met-O), using respiratory chain electrons. Thus protects these proteins from oxidative-stress damage caused by reactive species of oxygen and chlorine generated by the host defense mechanisms. MsrPQ is essential for the maintenance of envelope integrity under bleach stress, rescuing a wide series of structurally unrelated periplasmic proteins from methionine oxidation, including the primary periplasmic chaperone SurA and the lipoprotein Pal. MsrQ provides electrons for reduction to the reductase catalytic subunit MsrP, using the quinone pool of the respiratory chain. This Shigella flexneri protein is Protein-methionine-sulfoxide reductase heme-binding subunit MsrQ.